Consider the following 70-residue polypeptide: MTTILLKENEPFEVAIRRFRRAIEKNGLIAELRERQAYEKPTAVRKRKKAAAVKRLHKRLRSQMLPKKLH.

The protein belongs to the bacterial ribosomal protein bS21 family.

This chain is Small ribosomal subunit protein bS21A (rpsU1), found in Burkholderia mallei (strain ATCC 23344).